The following is a 775-amino-acid chain: Glutamine--tRNA ligase (775 aa).

Alanine 2 bears the N-acetylalanine mark. Serine 70 carries the post-translational modification Phosphoserine. ATP is bound by residues 271-273 (EPN) and 277-283 (HIGHAKA). Aspartate 303 provides a ligand contact to L-glutamine. Lysine 309 carries the post-translational modification N6-acetyllysine. Tyrosine 438 lines the L-glutamine pocket. ATP contacts are provided by residues threonine 457, 486–487 (RL), and 494–496 (VSK). Serine 495 carries the post-translational modification Phosphoserine.

It belongs to the class-I aminoacyl-tRNA synthetase family. Monomer. Part of a multisubunit complex that groups tRNA ligases for Arg (RARS1), Asp (DARS1), Gln (QARS1), Ile (IARS1), Leu (LARS1), Lys (KARS1), Met (MARS1) the bifunctional ligase for Glu and Pro (EPRS1) and the auxiliary subunits AIMP1/p43, AIMP2/p38 and EEF1E1/p18. Interacts with RARS1. Part of a complex composed of RARS1, QARS1 and AIMP1. Detected in dorsal root ganglia (at protein level). Detected in dorsal root ganglia.

The protein localises to the cytoplasm. It is found in the cytosol. It carries out the reaction tRNA(Gln) + L-glutamine + ATP = L-glutaminyl-tRNA(Gln) + AMP + diphosphate. Glutamine--tRNA ligase. Plays a critical role in brain development. The protein is Glutamine--tRNA ligase (Qars1) of Rattus norvegicus (Rat).